The primary structure comprises 206 residues: MTDSNGQKDNNQDQAQPADPVVSKPYIMPDDPEEGTNEALVREAAEARDKMLRTLAEMENLRRRTAKEVADARTYGVSAFARDVLEIADNLQRALDAVPAEARANADAGLKGLIEGVELTERSLINALEKNGVKKFDPQGEKFDPNFQQAMYEVPDPSVPAGTVVQVVQAGFMIGERVLRPALVGVSKGGAKPAPAAANGNEGGVA.

Polar residues predominate over residues 1–15; it reads MTDSNGQKDNNQDQA. The interval 1–38 is disordered; that stretch reads MTDSNGQKDNNQDQAQPADPVVSKPYIMPDDPEEGTNE.

The protein belongs to the GrpE family. Homodimer.

The protein localises to the cytoplasm. Its function is as follows. Participates actively in the response to hyperosmotic and heat shock by preventing the aggregation of stress-denatured proteins, in association with DnaK and GrpE. It is the nucleotide exchange factor for DnaK and may function as a thermosensor. Unfolded proteins bind initially to DnaJ; upon interaction with the DnaJ-bound protein, DnaK hydrolyzes its bound ATP, resulting in the formation of a stable complex. GrpE releases ADP from DnaK; ATP binding to DnaK triggers the release of the substrate protein, thus completing the reaction cycle. Several rounds of ATP-dependent interactions between DnaJ, DnaK and GrpE are required for fully efficient folding. The chain is Protein GrpE from Rhodopseudomonas palustris (strain BisB5).